A 293-amino-acid chain; its full sequence is MALVSADSRIAELLTELHQLIKQTQEERSRSEHNLVNIQKTHERMQTENKISPYYRTKLRGLYTTAKADAEAECNILRKALDKIAEIKSLLEERRIAAKIAGLYNDSEPPRKTMRRGVLMTLLQQSAMTLPLWIGKPGDKPPPLCGAIPASGDYVARPGDKVAARVKAVDGDEQWILAEVVSYSHATNKYEVDDIDEEGKERHTLSRRRVIPLPQWKANPETDPEALFQKEQLVLALYPQTTCFYRALIHAPPQRPQDDYSVLFEDTSYADGYSPPLNVAQRYVVACKEPKKK.

Positions 3-88 (LVSADSRIAE…KALDKIAEIK (86 aa)) form a coiled coil. The SGF29 C-terminal domain occupies 152 to 293 (GDYVARPGDK…VVACKEPKKK (142 aa)). 2 histone H3K4me3 N-terminus binding regions span residues 194–196 (DID) and 240–243 (QTTC). Residues 264–266 (FED) form a histone H3K4me3 binding region. K288 carries the post-translational modification N6-acetyllysine.

The protein belongs to the SGF29 family. As to quaternary structure, interacts with dimethylated and trimethylated 'Lys-4' of histone H3 (H3K4me2 and H3K4me3), with a preference for the trimethylated form (H3K4me3). Component of some SAGA-type complexes. Component of the ADA2A-containing complex (ATAC), composed of KAT14, KAT2A, TADA2L, TADA3L, ZZ3, MBIP, WDR5, YEATS2, CCDC101 and DR1. Interacts with (methylated) CGAS. Interacts with TADA3L, GCN5L2, SUPT3H and MYC.

The protein localises to the nucleus. In terms of biological role, chromatin reader component of some histone acetyltransferase (HAT) SAGA-type complexes like the TFTC-HAT, ATAC or STAGA complexes. SGF29 specifically recognizes and binds methylated 'Lys-4' of histone H3 (H3K4me), with a preference for trimethylated form (H3K4me3). In the SAGA-type complexes, SGF29 is required to recruit complexes to H3K4me. Involved in the response to endoplasmic reticulum (ER) stress by recruiting the SAGA complex to H3K4me, thereby promoting histone H3 acetylation and cell survival. Also binds non-histone proteins that are methylated on Lys residues: specifically recognizes and binds CGAS monomethylated on 'Lys-506'. The sequence is that of SAGA-associated factor 29 from Homo sapiens (Human).